Here is a 313-residue protein sequence, read N- to C-terminus: Leucine-rich repeat-containing protein 52 (313 aa).

The first 23 residues, 1–23 (MSLASGPGPGWLLFSFGMGLVSG), serve as a signal peptide directing secretion. The region spanning 24–53 (SKCPNNCLCQAQEVICTGKQLTEYPLDIPL) is the LRRNT domain. Residues 24-244 (SKCPNNCLCQ…MCITHLDHKD (221 aa)) lie on the Extracellular side of the membrane. Disulfide bonds link Cys26-Cys32 and Cys30-Cys39. 5 LRR repeats span residues 54–75 (NTRR…HLGL), 78–99 (DLVY…TFIG), 102–123 (KLIY…TFSV), 126–148 (NLVQ…TFAN), and 151–172 (SLRY…ALYH). N-linked (GlcNAc...) asparagine glycans are attached at residues Asn112 and Asn148. The LRRCT domain maps to 184–238 (NPWKCNCSFLDFAIFLIVFHMDPSDDLNATCVEPTELTGWPITRVGNPLRYMCIT). 2 cysteine pairs are disulfide-bonded: Cys188-Cys214 and Cys190-Cys236. Asn189 and Asn211 each carry an N-linked (GlcNAc...) asparagine glycan. A helical transmembrane segment spans residues 245–265 (YIFLLLIGFCIFAAGTVAAWL). Over 266 to 313 (TGVCAVLYQNTRHKSSEEDEDEAGTRVEVSRRIFQTQTSSVQEFPQLI) the chain is Cytoplasmic.

As to quaternary structure, may interact with KCNU1; this interaction may be required for LRRC52 stability and may change the channel gating properties. Interacts with KCNMA1. In terms of processing, N-glycosylated. Mainly expressed in testis and skeletal muscle.

Its subcellular location is the cell membrane. Auxiliary protein of the large-conductance, voltage and calcium-activated potassium channel (BK alpha). Modulates gating properties by producing a marked shift in the BK channel's voltage dependence of activation in the hyperpolarizing direction, and in the absence of calcium. KCNU1 channel auxiliary protein. Modulates KCNU1 gating properties. This chain is Leucine-rich repeat-containing protein 52 (LRRC52), found in Homo sapiens (Human).